The primary structure comprises 462 residues: Nuclear factor interleukin-3-regulated protein (462 aa).

Lysine 24 participates in a covalent cross-link: Glycyl lysine isopeptide (Lys-Gly) (interchain with G-Cter in SUMO2). Positions aspartate 73 to glutamine 136 constitute a bZIP domain. The segment at lysine 79–arginine 95 is basic motif. A leucine-zipper region spans residues leucine 99–isoleucine 106. 2 disordered regions span residues aspartate 189–arginine 236 and glycine 254–valine 303. Lysine 214 is covalently cross-linked (Glycyl lysine isopeptide (Lys-Gly) (interchain with G-Cter in SUMO2)). Lysine 219 is covalently cross-linked (Glycyl lysine isopeptide (Lys-Gly) (interchain with G-Cter in SUMO1); alternate). Lysine 219 participates in a covalent cross-link: Glycyl lysine isopeptide (Lys-Gly) (interchain with G-Cter in SUMO2); alternate. The span at serine 227 to arginine 236 shows a compositional bias: basic and acidic residues. Polar residues predominate over residues valine 264 to threonine 274. Serine 301 is subject to Phosphoserine. Glycyl lysine isopeptide (Lys-Gly) (interchain with G-Cter in SUMO2) cross-links involve residues lysine 314, lysine 326, lysine 332, lysine 337, and lysine 350. Serine 353 carries the post-translational modification Phosphoserine. Residues lysine 360, lysine 394, lysine 401, lysine 406, lysine 412, lysine 419, lysine 424, lysine 434, and lysine 448 each participate in a glycyl lysine isopeptide (Lys-Gly) (interchain with G-Cter in SUMO2) cross-link.

This sequence belongs to the bZIP family. NFIL3 subfamily. In terms of assembly, homodimer. Binds DNA as a dimer. Interacts with CRY2, DR1 and PER2. Interacts with NR0B2. Interacts with MYSM1.

It is found in the nucleus. Acts as a transcriptional regulator that recognizes and binds to the sequence 5'-[GA]TTA[CT]GTAA[CT]-3', a sequence present in many cellular and viral promoters. Represses transcription from promoters with activating transcription factor (ATF) sites. Represses promoter activity in osteoblasts. Represses transcriptional activity of PER1. Represses transcriptional activity of PER2 via the B-site on the promoter. Activates transcription from the interleukin-3 promoter in T-cells. Competes for the same consensus-binding site with PAR DNA-binding factors (DBP, HLF and TEF). Component of the circadian clock that acts as a negative regulator for the circadian expression of PER2 oscillation in the cell-autonomous core clock. Protects pro-B cells from programmed cell death. Represses the transcription of CYP2A5. Positively regulates the expression and activity of CES2 by antagonizing the repressive action of NR1D1 on CES2. Required for the development of natural killer cell precursors. This chain is Nuclear factor interleukin-3-regulated protein (NFIL3), found in Bos taurus (Bovine).